Here is a 526-residue protein sequence, read N- to C-terminus: Berberine bridge enzyme-like 11 (526 aa).

An N-terminal signal peptide occupies residues 1–21 (MEKLLIICMLLISVLVATSQS). C31 and C94 form a disulfide bridge. N-linked (GlcNAc...) asparagine glycosylation is found at N52, N136, N273, and N482. An FAD-binding PCMH-type domain is found at 72-247 (TTPKPIAIIT…MGYKIRLVPV (176 aa)). The segment at residues 109 to 171 (HDFEGLSYTS…NVLGFPAGLC (63 aa)) is a cross-link (6-(S-cysteinyl)-8alpha-(pros-histidyl)-FAD (His-Cys)).

The protein belongs to the oxygen-dependent FAD-linked oxidoreductase family. FAD serves as cofactor. Post-translationally, the FAD cofactor is bound via a bicovalent 6-S-cysteinyl, 8alpha-N1-histidyl FAD linkage.

It localises to the secreted. It is found in the cell wall. This Arabidopsis thaliana (Mouse-ear cress) protein is Berberine bridge enzyme-like 11.